The chain runs to 186 residues: Methyl-CpG-binding domain-containing protein 4 (186 aa).

A CW-type zinc finger spans residues 22-77 (GRLIDTYAAQCDNCHKWRVIDSQEEYEDIRSKMLEDPFNCQKKQGMSCEEPADIDY). Positions 31 to 69 (QCDNCHKWRVIDSQEEYEDIRSKMLEDPFNCQKKQGMSC) match the MBD-associated domain (MAD) motif. The Zn(2+) site is built by Cys32, Cys35, Cys61, and Cys69. The 71-residue stretch at 83-153 (WVIDKPGLPK…GDFNFTVPKV (71 aa)) folds into the MBD domain. The tract at residues 154-186 (MEDTVPPDPKLGSPFPSTTTTTSEKSSVKQSHN) is disordered. Residues 166 to 178 (SPFPSTTTTTSEK) are compositionally biased toward low complexity.

In terms of tissue distribution, expressed in rosette leaves, buds, flowers, stems, mature seeds and roots.

The protein localises to the nucleus. Its function is as follows. Transcriptional regulator that binds CpG, CpNpN and CpNpG (N is A, T, or C) islands in promoters regardless the DNA methylation status. Plays probably a role in gene silencing. This chain is Methyl-CpG-binding domain-containing protein 4 (MBD4), found in Arabidopsis thaliana (Mouse-ear cress).